We begin with the raw amino-acid sequence, 577 residues long: Arginine--tRNA ligase (577 aa).

Positions 122 to 132 (PNVAKEMHVGH) match the 'HIGH' region motif.

Belongs to the class-I aminoacyl-tRNA synthetase family. Monomer.

Its subcellular location is the cytoplasm. The catalysed reaction is tRNA(Arg) + L-arginine + ATP = L-arginyl-tRNA(Arg) + AMP + diphosphate. The sequence is that of Arginine--tRNA ligase from Aliivibrio fischeri (strain ATCC 700601 / ES114) (Vibrio fischeri).